A 361-amino-acid polypeptide reads, in one-letter code: 45 kDa calcium-binding protein (361 aa).

The first 35 residues, 1–35 (MVWLVAMTSRQRSLCGLAAHGLWFLGLVLLMDATA), serve as a signal peptide directing secretion. An N-linked (GlcNAc...) asparagine glycan is attached at Asn-39. EF-hand domains follow at residues 97–132 (RSRR…KTAE) and 136–171 (EAVK…SKGH). Ser-98 bears the Phosphoserine mark. Residues Asp-110, Asn-112, Asp-114, Arg-116, Glu-121, Asp-149, Asp-151, Asp-153, His-155, and Glu-160 each contribute to the Ca(2+) site. Position 192 is a phosphothreonine (Thr-192). 4 consecutive EF-hand domains span residues 196 to 231 (LGNL…HSRG), 232 to 267 (MLKF…TVEN), 277 to 312 (WVKD…MNEY), and 313 to 348 (NALN…FTGS). Asp-212 provides a ligand contact to Ca(2+). At Thr-216 the chain carries Phosphothreonine. Ca(2+)-binding residues include Glu-219, Asp-245, Asp-247, Asp-249, Gln-251, and Glu-256. At Thr-264 the chain carries Phosphothreonine. Ca(2+)-binding residues include Asp-290, Asn-292, and Asp-294. Phosphothreonine is present on Thr-298. Glu-301, Asp-326, Asn-328, Asn-330, His-332, and Glu-337 together coordinate Ca(2+). Residues 308-361 (PMNEYNALNEAKQMIAIADENQNHHLEPEEILKYSEFFTGSKLMDYARNVHEEF) form a necessary for intracellular retention in Golgi apparatus lumen region.

It belongs to the CREC family. In terms of assembly, a membrane-associated isoform interacts with STX3 and STXBP1. In terms of tissue distribution, a membrane-associated isoform is expressed in acini of the pancreas (at protein level). Ubiquitous.

The protein resides in the golgi apparatus lumen. Functionally, a membrane-associated isoform may be involved in the exocytosis of zymogens by pancreatic acini. May regulate calcium-dependent activities in the endoplasmic reticulum lumen or post-ER compartment. The protein is 45 kDa calcium-binding protein (Sdf4) of Rattus norvegicus (Rat).